Reading from the N-terminus, the 202-residue chain is Large ribosomal subunit protein eL13 (202 aa).

The disordered stretch occupies residues 183–202 (GIREKRAKEKAEAEAEKAKK).

This sequence belongs to the eukaryotic ribosomal protein eL13 family. As to quaternary structure, component of the large ribosomal subunit. Mature ribosomes consist of a small (40S) and a large (60S) subunit. The 40S subunit contains about 32 different proteins and 1 molecule of RNA (18S). The 60S subunit contains 45 different proteins and 3 molecules of RNA (25S, 5.8S and 5S).

It is found in the cytoplasm. In terms of biological role, component of the ribosome, a large ribonucleoprotein complex responsible for the synthesis of proteins in the cell. The small ribosomal subunit (SSU) binds messenger RNAs (mRNAs) and translates the encoded message by selecting cognate aminoacyl-transfer RNA (tRNA) molecules. The large subunit (LSU) contains the ribosomal catalytic site termed the peptidyl transferase center (PTC), which catalyzes the formation of peptide bonds, thereby polymerizing the amino acids delivered by tRNAs into a polypeptide chain. The nascent polypeptides leave the ribosome through a tunnel in the LSU and interact with protein factors that function in enzymatic processing, targeting, and the membrane insertion of nascent chains at the exit of the ribosomal tunnel. The polypeptide is Large ribosomal subunit protein eL13 (Candida albicans (strain SC5314 / ATCC MYA-2876) (Yeast)).